An 837-amino-acid polypeptide reads, in one-letter code: WW domain-containing protein tag-325 (837 aa).

The segment covering 1–11 (MTTAVQPSDTT) has biased composition (polar residues). A disordered region spans residues 1–66 (MTTAVQPSDT…SNGQNYADDP (66 aa)). The span at 33-43 (SESAESSSSSS) shows a compositional bias: low complexity. A compositionally biased stretch (polar residues) spans 44 to 61 (QTNVSAANTLPRESNGQN). The WW domain maps to 96-129 (RDLLNGWFEYETDVGRTFFFNKETGKSQWIPPRF). Low complexity predominate over residues 150–161 (TCSFQGSSTSSS). Disordered regions lie at residues 150-181 (TCSFQGSSTSSSEEQKENKMRESLADDDRKSQ), 194-257 (DDVD…STAS), 338-403 (TTSS…EPAE), 548-574 (MRRRDDPMSQSAIETVSTSVSTDEPRP), and 778-800 (KNKKAGKKAKPSKKEETQATPVQ). Basic and acidic residues predominate over residues 162–181 (EEQKENKMRESLADDDRKSQ). Polar residues predominate over residues 247-257 (PTSSRKASTAS). Over residues 371–403 (RCEERRGSGDGREPVRTIRCGDLERSENDEPAE) the composition is skewed to basic and acidic residues. The 120-residue stretch at 386 to 505 (RTIRCGDLER…WYKSLEEVVA (120 aa)) folds into the PH domain. The segment covering 556-569 (SQSAIETVSTSVST) has biased composition (polar residues). One can recognise a Rho-GAP domain in the interval 610 to 827 (STLSAICQHE…YLLESANKFD (218 aa)). Positions 778–788 (KNKKAGKKAKP) are enriched in basic residues.

This chain is WW domain-containing protein tag-325 (tag-325), found in Caenorhabditis elegans.